We begin with the raw amino-acid sequence, 230 residues long: DNA repair protein rdl1 (230 aa).

In terms of assembly, interacts with rlp1 and sws1.

It is found in the cytoplasm. Its subcellular location is the nucleus. Functionally, involved in homologous recombination where it functions at an early stage of recombination in a pre-recombinogenic complex with rlp1 and sws1. Also has a role at a later stage of recombination in association with the rhp55-rhp57 complex. The sequence is that of DNA repair protein rdl1 (rdl1) from Schizosaccharomyces pombe (strain 972 / ATCC 24843) (Fission yeast).